We begin with the raw amino-acid sequence, 402 residues long: Sulfate adenylyltransferase (402 aa).

The protein belongs to the sulfate adenylyltransferase family.

The enzyme catalyses sulfate + ATP + H(+) = adenosine 5'-phosphosulfate + diphosphate. It functions in the pathway sulfur metabolism; hydrogen sulfide biosynthesis; sulfite from sulfate: step 1/3. The chain is Sulfate adenylyltransferase from Ruthia magnifica subsp. Calyptogena magnifica.